Reading from the N-terminus, the 543-residue chain is Chaperonin GroEL (543 aa).

Residues 29 to 32 (TLGP), 86 to 90 (DGTTT), Gly413, 478 to 480 (NAA), and Asp494 contribute to the ATP site.

Belongs to the chaperonin (HSP60) family. Forms a cylinder of 14 subunits composed of two heptameric rings stacked back-to-back. Interacts with the co-chaperonin GroES.

The protein localises to the cytoplasm. It catalyses the reaction ATP + H2O + a folded polypeptide = ADP + phosphate + an unfolded polypeptide.. In terms of biological role, together with its co-chaperonin GroES, plays an essential role in assisting protein folding. The GroEL-GroES system forms a nano-cage that allows encapsulation of the non-native substrate proteins and provides a physical environment optimized to promote and accelerate protein folding. This is Chaperonin GroEL from Lactobacillus gasseri (strain ATCC 33323 / DSM 20243 / BCRC 14619 / CIP 102991 / JCM 1131 / KCTC 3163 / NCIMB 11718 / NCTC 13722 / AM63).